The sequence spans 188 residues: GMP synthase [glutamine-hydrolyzing] subunit A (188 aa).

Positions 2 to 188 constitute a Glutamine amidotransferase type-1 domain; sequence KIAVIYFGGQ…FKNFIEACKK (187 aa). The active-site Nucleophile is C79. Active-site residues include H166 and E168.

In terms of assembly, heterodimer composed of a glutamine amidotransferase subunit (A) and a GMP-binding subunit (B).

The catalysed reaction is XMP + L-glutamine + ATP + H2O = GMP + L-glutamate + AMP + diphosphate + 2 H(+). It functions in the pathway purine metabolism; GMP biosynthesis; GMP from XMP (L-Gln route): step 1/1. Catalyzes the synthesis of GMP from XMP. This chain is GMP synthase [glutamine-hydrolyzing] subunit A, found in Sulfurisphaera tokodaii (strain DSM 16993 / JCM 10545 / NBRC 100140 / 7) (Sulfolobus tokodaii).